A 477-amino-acid polypeptide reads, in one-letter code: 23S rRNA (uracil(1939)-C(5))-methyltransferase RlmD (477 aa).

The TRAM domain maps to 7–66; it reads KTENFPPDWLLVESLDLEAQGVAHRADGKVVFIKGALPFELVSANVHRKKNNWEQGVVTA. [4Fe-4S] cluster contacts are provided by C79, C89, C92, and C171. Residues Q280, F309, N314, E330, N365, and D386 each coordinate S-adenosyl-L-methionine. The active-site Nucleophile is the C432.

It belongs to the class I-like SAM-binding methyltransferase superfamily. RNA M5U methyltransferase family. RlmD subfamily.

The catalysed reaction is uridine(1939) in 23S rRNA + S-adenosyl-L-methionine = 5-methyluridine(1939) in 23S rRNA + S-adenosyl-L-homocysteine + H(+). Catalyzes the formation of 5-methyl-uridine at position 1939 (m5U1939) in 23S rRNA. This chain is 23S rRNA (uracil(1939)-C(5))-methyltransferase RlmD, found in Albidiferax ferrireducens (strain ATCC BAA-621 / DSM 15236 / T118) (Rhodoferax ferrireducens).